The chain runs to 138 residues: Ribosome-binding factor A (138 aa).

A disordered region spans residues 117-138 (ERQNKPAASTEKPPVGSLDADL).

This sequence belongs to the RbfA family. In terms of assembly, monomer. Binds 30S ribosomal subunits, but not 50S ribosomal subunits or 70S ribosomes.

It localises to the cytoplasm. In terms of biological role, one of several proteins that assist in the late maturation steps of the functional core of the 30S ribosomal subunit. Associates with free 30S ribosomal subunits (but not with 30S subunits that are part of 70S ribosomes or polysomes). Required for efficient processing of 16S rRNA. May interact with the 5'-terminal helix region of 16S rRNA. This Acaryochloris marina (strain MBIC 11017) protein is Ribosome-binding factor A.